A 394-amino-acid chain; its full sequence is GTPase Obg (394 aa).

In terms of domain architecture, Obg spans 5–163; the sequence is SNFVDYVKIY…RMVIMQLKML (159 aa). The segment at 26–45 is disordered; sequence HFRREKYIPKGGPDGGDGGR. Positions 164-330 constitute an OBG-type G domain; sequence ADVGLVGFPN…LKDTLWKELS (167 aa). GTP-binding positions include 170 to 177, 195 to 199, 217 to 220, 284 to 287, and 311 to 313; these read GFPNAGKS, FTTLE, DIPG, TKCD, and SAV. Mg(2+) contacts are provided by Ser-177 and Thr-197.

It belongs to the TRAFAC class OBG-HflX-like GTPase superfamily. OBG GTPase family. Monomer. Mg(2+) is required as a cofactor.

It localises to the cytoplasm. Functionally, an essential GTPase which binds GTP, GDP and possibly (p)ppGpp with moderate affinity, with high nucleotide exchange rates and a fairly low GTP hydrolysis rate. Plays a role in control of the cell cycle, stress response, ribosome biogenesis and in those bacteria that undergo differentiation, in morphogenesis control. The polypeptide is GTPase Obg (Porphyromonas gingivalis (strain ATCC 33277 / DSM 20709 / CIP 103683 / JCM 12257 / NCTC 11834 / 2561)).